Consider the following 249-residue polypeptide: MAGHSHWAQIKHKKAKVDAQRGKLFSKLIREIIVATRLGGPNPEFNPRLRTAIEQAKKANMPWENIERAIKKGAGELEGEQFEEVIYEGYAPGGVAVMVLATTDNRNRTTSEVRHVFTKHGGNLGASGCVSYLFERKGYIEVPAKEVSEEELLEKAIEVGAEDVQPGEEVHIIYTVPEELYEVKENLEKLGVPIEKAQITWKPISTVQINDEETAQKVIKLLNALEELDDVQQVIANFEIPEEILQKVG.

The protein belongs to the TACO1 family.

It localises to the cytoplasm. This is Probable transcriptional regulatory protein aq_1575 from Aquifex aeolicus (strain VF5).